Reading from the N-terminus, the 155-residue chain is Large ribosomal subunit protein uL11 (155 aa).

Belongs to the universal ribosomal protein uL11 family. As to quaternary structure, part of the ribosomal stalk of the 50S ribosomal subunit. Interacts with L10 and the large rRNA to form the base of the stalk. L10 forms an elongated spine to which L12 dimers bind in a sequential fashion forming a multimeric L10(L12)X complex.

In terms of biological role, forms part of the ribosomal stalk which helps the ribosome interact with GTP-bound translation factors. The chain is Large ribosomal subunit protein uL11 from Picrophilus torridus (strain ATCC 700027 / DSM 9790 / JCM 10055 / NBRC 100828 / KAW 2/3).